The following is a 71-amino-acid chain: General transcription factor IIH subunit 5 (71 aa).

Phosphothreonine is present on T69.

It belongs to the TFB5 family. In terms of assembly, component of the 7-subunit TFIIH core complex composed of XPB/ERCC3, XPD/ERCC2, GTF2H1, GTF2H2, GTF2H3, GTF2H4 and GTF2H5, which is active in NER. The core complex associates with the 3-subunit CDK-activating kinase (CAK) module composed of CCNH/cyclin H, CDK7 and MNAT1 to form the 10-subunit holoenzyme (holo-TFIIH) active in transcription. Part of TBP-based Pol II pre-initiation complex (PIC), in which Pol II core assembles with general transcription factors and other specific initiation factors including GTF2E1, GTF2E2, GTF2F1, GTF2F2, TCEA1, ERCC2, ERCC3, GTF2H2, GTF2H3, GTF2H4, GTF2H5, GTF2A1, GTF2A2, GTF2B and TBP; this large multi-subunit PIC complex mediates DNA unwinding and targets Pol II core to the transcription start site where the first phosphodiester bond forms.

It is found in the nucleus. The protein localises to the cytoplasm. Functionally, component of the general transcription and DNA repair factor IIH (TFIIH) core complex, which is involved in general and transcription-coupled nucleotide excision repair (NER) of damaged DNA and, when complexed to CAK, in RNA transcription by RNA polymerase II. In NER, TFIIH acts by opening DNA around the lesion to allow the excision of the damaged oligonucleotide and its replacement by a new DNA fragment. In transcription, TFIIH has an essential role in transcription initiation. When the pre-initiation complex (PIC) has been established, TFIIH is required for promoter opening and promoter escape. Phosphorylation of the C-terminal tail (CTD) of the largest subunit of RNA polymerase II by the kinase module CAK controls the initiation of transcription. Necessary for the stability of the TFIIH complex and for the presence of normal levels of TFIIH in the cell. The polypeptide is General transcription factor IIH subunit 5 (Homo sapiens (Human)).